A 147-amino-acid chain; its full sequence is Cyanate hydratase (147 aa).

Catalysis depends on residues Arg-88, Glu-91, and Ser-114.

This sequence belongs to the cyanase family.

The enzyme catalyses cyanate + hydrogencarbonate + 3 H(+) = NH4(+) + 2 CO2. Functionally, catalyzes the reaction of cyanate with bicarbonate to produce ammonia and carbon dioxide. This chain is Cyanate hydratase, found in Variovorax paradoxus (strain S110).